Here is a 156-residue protein sequence, read N- to C-terminus: Ribonuclease pancreatic (156 aa).

The first 28 residues, 1–28, serve as a signal peptide directing secretion; sequence MALEKSLVLLPLLVLILLVLGWVQPSLG. Positions 33 to 43 are enriched in basic and acidic residues; the sequence is AKKFQRQHMDS. The interval 33–52 is disordered; the sequence is AKKFQRQHMDSDSSPSSNST. The substrate site is built by Lys35 and Arg38. The active-site Proton acceptor is the His40. 2 N-linked (GlcNAc...) asparagine glycosylation sites follow: Asn50 and Asn62. Intrachain disulfides connect Cys54/Cys112, Cys68/Cys123, Cys86/Cys138, and Cys93/Cys100. Substrate-binding positions include 69–73 and Lys94; that span reads KPVNT. The N-linked (GlcNAc...) asparagine glycan is linked to Asn104. Substrate is bound at residue Arg113. An N-linked (GlcNAc...) asparagine glycan is attached at Asn116. The active-site Proton donor is the His147.

This sequence belongs to the pancreatic ribonuclease family. In terms of assembly, monomer. Interacts with and forms tight 1:1 complexes with RNH1. Dimerization of two such complexes may occur. Interaction with RNH1 inhibits this protein.

It localises to the secreted. The catalysed reaction is an [RNA] containing cytidine + H2O = an [RNA]-3'-cytidine-3'-phosphate + a 5'-hydroxy-ribonucleotide-3'-[RNA].. It carries out the reaction an [RNA] containing uridine + H2O = an [RNA]-3'-uridine-3'-phosphate + a 5'-hydroxy-ribonucleotide-3'-[RNA].. Endonuclease that catalyzes the cleavage of RNA on the 3' side of pyrimidine nucleotides. Acts on single-stranded and double-stranded RNA. The protein is Ribonuclease pancreatic (RNASE1) of Gorilla gorilla gorilla (Western lowland gorilla).